Reading from the N-terminus, the 437-residue chain is MILLWSCLLVAVVGILGTATPQPGNSSLHRLTRQLLQQYHKEVRPVYNWAEATTVYLDLCVHAVLDVDVQNQKLKTSMWYREVWNDEFLSWNSSLFDDIQEISLPLSAIWAPDIIINEFVDVERSPDLPYVYVNSSGTIRNHKPIQVVSACSLQTYAFPFDIQNCSLTFNSILHTVEDIDLGFLRNQEDIENDKRSFLNDSEWQLLSVTSTYHIRQSSAGDFAQIRFNVVIRRCPLAYVVSLLIPSIFLMLVDLGSFYLPPNCRARIVFKTNVLVGYTVFRVNMSDEVPRSAGCTSLIGVFFTVCMALLVLSLSKSILLIKFLYEERHSEQERPLMCLRGDSDANESRLYLRAPCAEDTESPVRQEHQVPSDTLKDFWFQLQSINNSLRTRDQVYQKEVEWLAILCHFDQLLFRIYLAVLGLYTVTLCSLWALWSRM.

Positions 1-21 are cleaved as a signal peptide; it reads MILLWSCLLVAVVGILGTATP. Over 22-235 the chain is Extracellular; sequence QPGNSSLHRL…RFNVVIRRCP (214 aa). Residues asparagine 25, asparagine 92, and asparagine 134 are each glycosylated (N-linked (GlcNAc...) asparagine). An intrachain disulfide couples cysteine 151 to cysteine 165. The helical transmembrane segment at 236–255 threads the bilayer; sequence LAYVVSLLIPSIFLMLVDLG. At 256–266 the chain is on the cytoplasmic side; sequence SFYLPPNCRAR. The helical transmembrane segment at 267 to 284 threads the bilayer; it reads IVFKTNVLVGYTVFRVNM. Over 285–295 the chain is Extracellular; it reads SDEVPRSAGCT. Residues 296-324 traverse the membrane as a helical segment; that stretch reads SLIGVFFTVCMALLVLSLSKSILLIKFLY. Residues 325 to 410 lie on the Cytoplasmic side of the membrane; the sequence is EERHSEQERP…WLAILCHFDQ (86 aa). Residues 377–409 form an HA-stretch; determines single-channel conductance in 5-HT3 receptors region; the sequence is FWFQLQSINNSLRTRDQVYQKEVEWLAILCHFD. A helical transmembrane segment spans residues 411-434; it reads LLFRIYLAVLGLYTVTLCSLWALW. Residues 435–437 lie on the Extracellular side of the membrane; it reads SRM.

The protein belongs to the ligand-gated ion channel (TC 1.A.9) family. 5-hydroxytryptamine receptor (TC 1.A.9.2) subfamily. HTR3B sub-subfamily. Forms homopentameric as well as heteropentameric serotonin-activated cation-selective channel complexes with HTR3A. The homomeric complex is not functional. Heteropentameric complexes display properties which resemble that of neuronal serotonin-activated channels in vivo. In terms of processing, N-glycosylation is required for membrane localization. As to expression, expressed in peripheral neurons, but not in neurons of the central nervous system.

Its subcellular location is the postsynaptic cell membrane. The protein resides in the cell membrane. The enzyme catalyses Na(+)(in) = Na(+)(out). It catalyses the reaction K(+)(in) = K(+)(out). The catalysed reaction is Ca(2+)(in) = Ca(2+)(out). In terms of biological role, forms serotonin (5-hydroxytryptamine/5-HT3)-activated cation-selective channel complexes, which when activated cause fast, depolarizing responses in neurons. The chain is 5-hydroxytryptamine receptor 3B from Rattus norvegicus (Rat).